An 89-amino-acid polypeptide reads, in one-letter code: Translation initiation factor IF-1 1 (89 aa).

The 73-residue stretch at 1-73 (MSNKEQLIEM…TKGRITFRHL (73 aa)) folds into the S1-like domain.

The protein belongs to the IF-1 family. As to quaternary structure, component of the 30S ribosomal translation pre-initiation complex which assembles on the 30S ribosome in the order IF-2 and IF-3, IF-1 and N-formylmethionyl-tRNA(fMet); mRNA recruitment can occur at any time during PIC assembly.

It is found in the cytoplasm. One of the essential components for the initiation of protein synthesis. Stabilizes the binding of IF-2 and IF-3 on the 30S subunit to which N-formylmethionyl-tRNA(fMet) subsequently binds. Helps modulate mRNA selection, yielding the 30S pre-initiation complex (PIC). Upon addition of the 50S ribosomal subunit IF-1, IF-2 and IF-3 are released leaving the mature 70S translation initiation complex. The chain is Translation initiation factor IF-1 1 from Acidovorax sp. (strain JS42).